Consider the following 76-residue polypeptide: Vasotab (76 aa).

Residues M1–A20 form the signal peptide. The region spanning D21–K76 is the Kazal-like domain. Cystine bridges form between C23/C60, C27/C53, and C35/C75.

In terms of tissue distribution, expressed by the salivary gland.

It localises to the secreted. Its function is as follows. Vasodilator protein that inhibits vasoconstriction of isolated rat femoral artery induced by phenylephrine. Since platelet aggregation and vasoconstriction are key hemostatic responses, particularly in small wounds, this protein likely participates in the antihemostatic responses during blood feeding. Blocks L-type calcium channels (Cav1/CACNA1) in left ventricular myocytes isolated from rat hearts. This is Vasotab from Hybomitra bimaculata (Horse fly).